A 1008-amino-acid chain; its full sequence is Histone deacetylase complex subunit SAP130-A (1008 aa).

Residues 1-31 (MNSQQFPRQAASMPSPQVSNSGASVGQNVQG) show a composition bias toward polar residues. 4 disordered regions span residues 1–44 (MNSQ…DVQS), 113–134 (SKSTMPSRPIAPAPPSAMSAVP), 415–435 (IQSDYGTERGNLIPIPGHRAS), and 617–720 (TPGG…PATI). Basic and acidic residues predominate over residues 35 to 44 (EVARDMDVQS). Positions 618-644 (PGGTTVMQSHSQSPGIGSSPAQGSSPR) are enriched in polar residues. A compositionally biased stretch (low complexity) spans 678–697 (ADQPSAAASLPSSHHPAAAV).

This sequence belongs to the SAP130 family.

The protein resides in the nucleus. Functionally, acts as a transcriptional repressor. The sequence is that of Histone deacetylase complex subunit SAP130-A (sap130-a) from Xenopus laevis (African clawed frog).